We begin with the raw amino-acid sequence, 439 residues long: tRNA-2-methylthio-N(6)-dimethylallyladenosine synthase (439 aa).

Positions 2-119 (KYIYIKTWGC…LPKMIDEVEK (118 aa)) constitute an MTTase N-terminal domain. Residues C11, C48, C82, C156, C160, and C163 each coordinate [4Fe-4S] cluster. In terms of domain architecture, Radical SAM core spans 142-374 (KKKGYTADIS…QERINIQTML (233 aa)). The region spanning 377–439 (RKMFGSIQSV…HTHSLKGELF (63 aa)) is the TRAM domain.

The protein belongs to the methylthiotransferase family. MiaB subfamily. As to quaternary structure, monomer. Requires [4Fe-4S] cluster as cofactor.

Its subcellular location is the cytoplasm. The enzyme catalyses N(6)-dimethylallyladenosine(37) in tRNA + (sulfur carrier)-SH + AH2 + 2 S-adenosyl-L-methionine = 2-methylsulfanyl-N(6)-dimethylallyladenosine(37) in tRNA + (sulfur carrier)-H + 5'-deoxyadenosine + L-methionine + A + S-adenosyl-L-homocysteine + 2 H(+). Functionally, catalyzes the methylthiolation of N6-(dimethylallyl)adenosine (i(6)A), leading to the formation of 2-methylthio-N6-(dimethylallyl)adenosine (ms(2)i(6)A) at position 37 in tRNAs that read codons beginning with uridine. The chain is tRNA-2-methylthio-N(6)-dimethylallyladenosine synthase from Buchnera aphidicola subsp. Acyrthosiphon pisum (strain APS) (Acyrthosiphon pisum symbiotic bacterium).